The primary structure comprises 681 residues: Pentatricopeptide repeat-containing protein At2g22410, mitochondrial (681 aa).

The transit peptide at 1–32 (MNISKAKLLLLPPPLTPKLNRSLYSHSQRRTR) directs the protein to the mitochondrion. PPR repeat units follow at residues 117-151 (NIFS…GCCE), 155-189 (DHFT…RLEL), 190-220 (VSHV…SPVR), 221-255 (DLVS…GVKP), 256-290 (DDVT…GLRM), 291-321 (TIPL…LEKR), 322-356 (TIVS…DVVL), 357-387 (WNAM…NTKP), 388-422 (DEIT…SLSL), 423-453 (NVAL…IQTR), 454-488 (NSLT…GIAP), 489-519 (DEIT…MKSR), and 525-555 (QLKH…MPME). The segment at 560-635 (VWGALLFGCR…IPGCSSIEVN (76 aa)) is type E motif. The tract at residues 636–666 (GIVCEFIVRDKSRPESEKIYDRLHCLGRHMR) is type E(+) motif.

This sequence belongs to the PPR family. PCMP-E subfamily.

It localises to the mitochondrion. This Arabidopsis thaliana (Mouse-ear cress) protein is Pentatricopeptide repeat-containing protein At2g22410, mitochondrial (PCMP-E28).